A 316-amino-acid chain; its full sequence is tRNA-dihydrouridine(16) synthase (316 aa).

Residues 7-9 (PME) and Gln68 each bind FMN. Cys98 functions as the Proton donor in the catalytic mechanism. Residues Lys139, 200–202 (NGE), and 224–225 (GR) contribute to the FMN site.

It belongs to the Dus family. DusC subfamily. It depends on FMN as a cofactor.

It carries out the reaction 5,6-dihydrouridine(16) in tRNA + NADP(+) = uridine(16) in tRNA + NADPH + H(+). It catalyses the reaction 5,6-dihydrouridine(16) in tRNA + NAD(+) = uridine(16) in tRNA + NADH + H(+). In terms of biological role, catalyzes the synthesis of 5,6-dihydrouridine (D), a modified base found in the D-loop of most tRNAs, via the reduction of the C5-C6 double bond in target uridines. Specifically modifies U16 in tRNAs. The chain is tRNA-dihydrouridine(16) synthase from Escherichia coli O157:H7.